The following is a 132-amino-acid chain: Histone H2B.9 (132 aa).

Basic and acidic residues predominate over residues 1-11; that stretch reads MAPKAEKKPAE. A disordered region spans residues 1–41; sequence MAPKAEKKPAEKAPAPKAEKKIAKEGGTSEIVKKKKKTKKS. At A2 the chain carries N,N,N-trimethylalanine; alternate. N,N-dimethylalanine; alternate is present on A2. A2 bears the N-methylalanine; alternate mark. At K4 the chain carries N6-methyllysine. K7, K12, K20, and K21 each carry N6-acetyllysine. Residue K128 forms a Glycyl lysine isopeptide (Lys-Gly) (interchain with G-Cter in ubiquitin) linkage.

The protein belongs to the histone H2B family. In terms of assembly, the nucleosome is a histone octamer containing two molecules each of H2A, H2B, H3 and H4 assembled in one H3-H4 heterotetramer and two H2A-H2B heterodimers. The octamer wraps approximately 147 bp of DNA. In terms of processing, can be acetylated to form H2BK6ac, H2BK33ac and H2BK34ac. Monoubiquitinated by BRE1 to form H2BK143ub1 and deubiquitinated by UBP26. Required for heterochromatic histone H3 di- and trimethylation at H3K4me. May give a specific tag for epigenetic transcriptional activation.

The protein resides in the nucleus. The protein localises to the chromosome. Its function is as follows. Core component of nucleosome. Nucleosomes wrap and compact DNA into chromatin, limiting DNA accessibility to the cellular machineries which require DNA as a template. Histones thereby play a central role in transcription regulation, DNA repair, DNA replication and chromosomal stability. DNA accessibility is regulated via a complex set of post-translational modifications of histones, also called histone code, and nucleosome remodeling. This Arabidopsis thaliana (Mouse-ear cress) protein is Histone H2B.9.